The chain runs to 650 residues: Gamma-tubulin complex component 4 homolog (650 aa).

Ser214 carries the post-translational modification Phosphoserine. Thr216 carries the post-translational modification Phosphothreonine. Ser218 carries the phosphoserine modification.

Belongs to the TUBGCP family.

It is found in the cytoplasm. Its subcellular location is the cytoskeleton. It localises to the microtubule organizing center. The protein resides in the centrosome. Its function is as follows. Gamma-tubulin complex is necessary for microtubule nucleation at the centrosome. In Drosophila melanogaster (Fruit fly), this protein is Gamma-tubulin complex component 4 homolog (Grip75).